A 358-amino-acid polypeptide reads, in one-letter code: Molybdenum import ATP-binding protein ModC (358 aa).

The 233-residue stretch at 2–234 (NDDISASFFS…PDLPLAHLEE (233 aa)) folds into the ABC transporter domain. 34–41 (GRSGSGKT) provides a ligand contact to ATP. The 66-residue stretch at 293 to 358 (LSSISNCIPV…AQVKSVALID (66 aa)) folds into the Mop domain.

Belongs to the ABC transporter superfamily. Molybdate importer (TC 3.A.1.8) family. The complex is composed of two ATP-binding proteins (ModC), two transmembrane proteins (ModB) and a solute-binding protein (ModA).

The protein localises to the cell inner membrane. It carries out the reaction molybdate(out) + ATP + H2O = molybdate(in) + ADP + phosphate + H(+). Functionally, part of the ABC transporter complex ModABC involved in molybdenum import. Responsible for energy coupling to the transport system. This is Molybdenum import ATP-binding protein ModC from Hahella chejuensis (strain KCTC 2396).